We begin with the raw amino-acid sequence, 517 residues long: Pentatricopeptide repeat-containing protein At5g42450, mitochondrial (517 aa).

The N-terminal 23 residues, 1 to 23, are a transit peptide targeting the mitochondrion; sequence MLHMILSQRVILLRKYHSSANAL. PPR repeat units follow at residues 57 to 91, 92 to 126, 127 to 157, 158 to 188, 189 to 223, 225 to 259, 261 to 291, 294 to 329, and 368 to 398; these read DVISATAVIGRFVKESRHVEASQAFKRLLCLGIRP, NEFTFGTVIGSSTTSRDVKLGKQLHCYALKMGLAS, NVFVGSAVLNCYVKLSTLTDARRCFDDTRDP, NVVSITNLISGYLKKHEFEEALSLFRAMPER, SVVTWNAVIGGFSQTGRNEEAVNTFVDMLREGVVI, NESTFPCAITAISNIASHGAGKSIHACAIKFLGKR, NVFVWNSLISFYSKCGNMEDSLLAFNKLEEE, NIVSWNSMIWGYAHNGRGEEAVAMFEKMVKDTNLRP, and ELEHYACMVDMLSRSGRFKEAEELIKSMPLD. Residues 403 to 478 are type E motif; that stretch reads FWKALLGGCQ…FTGCSWIEVR (76 aa). The type E(+) motif stretch occupies residues 479–509; it reads DQIRVFVNADKNNELKDEVYRMLALVSQHLE.

It belongs to the PPR family. PCMP-E subfamily.

The protein resides in the mitochondrion. The sequence is that of Pentatricopeptide repeat-containing protein At5g42450, mitochondrial (PCMP-E102) from Arabidopsis thaliana (Mouse-ear cress).